The primary structure comprises 532 residues: Glucose-6-phosphate isomerase (532 aa).

E322 acts as the Proton donor in catalysis. Catalysis depends on residues H351 and K457.

This sequence belongs to the GPI family.

The protein resides in the cytoplasm. The catalysed reaction is alpha-D-glucose 6-phosphate = beta-D-fructose 6-phosphate. The protein operates within carbohydrate biosynthesis; gluconeogenesis. It participates in carbohydrate degradation; glycolysis; D-glyceraldehyde 3-phosphate and glycerone phosphate from D-glucose: step 2/4. Catalyzes the reversible isomerization of glucose-6-phosphate to fructose-6-phosphate. In Synechococcus sp. (strain JA-3-3Ab) (Cyanobacteria bacterium Yellowstone A-Prime), this protein is Glucose-6-phosphate isomerase.